A 967-amino-acid polypeptide reads, in one-letter code: RNA polymerase-associated protein RapA (967 aa).

Residues 163-333 enclose the Helicase ATP-binding domain; sequence EVGKRHNPRV…FARLRLLDPN (171 aa). Residue 176 to 183 participates in ATP binding; sequence DEVGLGKT. The DEAH box motif lies at 279–282; it reads DEAH. Residues 489-660 form the Helicase C-terminal domain; sequence RVEWLLGFLT…NYLAQPNELG (172 aa).

It belongs to the SNF2/RAD54 helicase family. RapA subfamily. As to quaternary structure, interacts with the RNAP. Has a higher affinity for the core RNAP than for the holoenzyme. Its ATPase activity is stimulated by binding to RNAP.

Its function is as follows. Transcription regulator that activates transcription by stimulating RNA polymerase (RNAP) recycling in case of stress conditions such as supercoiled DNA or high salt concentrations. Probably acts by releasing the RNAP, when it is trapped or immobilized on tightly supercoiled DNA. Does not activate transcription on linear DNA. Probably not involved in DNA repair. In Proteus mirabilis (strain HI4320), this protein is RNA polymerase-associated protein RapA.